The sequence spans 365 residues: Isopentenyl-diphosphate delta-isomerase (365 aa).

Residue 8–9 (RK) participates in substrate binding. Residues 67–69 (SIT), S97, and N126 each bind FMN. 97–99 (SQR) provides a ligand contact to substrate. Q160 contributes to the substrate binding site. Residue E161 participates in Mg(2+) binding. Residues K192, T222, 272-274 (GVR), and 293-294 (AL) each bind FMN.

It belongs to the IPP isomerase type 2 family. Homooctamer. Dimer of tetramers. The cofactor is FMN. NADPH serves as cofactor. Requires Mg(2+) as cofactor.

It localises to the cytoplasm. The enzyme catalyses isopentenyl diphosphate = dimethylallyl diphosphate. Functionally, involved in the biosynthesis of isoprenoids. Catalyzes the 1,3-allylic rearrangement of the homoallylic substrate isopentenyl (IPP) to its allylic isomer, dimethylallyl diphosphate (DMAPP). This chain is Isopentenyl-diphosphate delta-isomerase, found in Methanosarcina acetivorans (strain ATCC 35395 / DSM 2834 / JCM 12185 / C2A).